The chain runs to 342 residues: UDP-xylose transporter 1 (342 aa).

10 consecutive transmembrane segments (helical) span residues 7-27 (MQMG…SIVI), 36-56 (LGFP…YCTL), 75-95 (VVLF…SLGF), 100-120 (FYQM…TLFL), 132-152 (LFLL…LNFV), 154-174 (SVLS…TNTI), 184-204 (QLLY…GPFV), 221-241 (IVVG…FSTF), 250-270 (VTYQ…GYTL), and 280-300 (IAGI…CSVA). The interval 305-342 (QASSDSTFLGKDRDTTPLLGQENENHHEAKKLDKHSPV) is disordered. Positions 327–342 (NENHHEAKKLDKHSPV) are enriched in basic and acidic residues.

Belongs to the TPT transporter family. TPT (TC 2.A.7.9) subfamily. Ubiquitous.

The protein resides in the golgi apparatus membrane. Its subcellular location is the endoplasmic reticulum membrane. In terms of biological role, nucleotide-sugar transporter that transports UDP-xylose and UMP in a strict counter-exchange mode. This chain is UDP-xylose transporter 1, found in Arabidopsis thaliana (Mouse-ear cress).